A 103-amino-acid chain; its full sequence is Defensin-like protein 290 (103 aa).

The first 29 residues, 1–29, serve as a signal peptide directing secretion; it reads MTALRRTISIIFVFYLSCTLFVNIFGVQA. Cystine bridges form between Cys-33/Cys-50, Cys-39/Cys-55, Cys-43/Cys-57, Cys-72/Cys-92, Cys-78/Cys-98, and Cys-84/Cys-100.

It belongs to the DEFL family.

It localises to the secreted. The sequence is that of Defensin-like protein 290 from Arabidopsis thaliana (Mouse-ear cress).